The primary structure comprises 231 residues: Fibronectin type III domain-containing protein 4 (231 aa).

The first 40 residues, Met1–Ala40, serve as a signal peptide directing secretion. The Extracellular segment spans residues Asp41–Thr163. Residues Pro43–Gly136 enclose the Fibronectin type-III domain. N-linked (GlcNAc...) asparagine glycosylation is found at Asn48 and Asn143. The interval Gly118–Asp156 is disordered. Residues Gly164–Cys184 traverse the membrane as a helical segment. The Cytoplasmic portion of the chain corresponds to Arg185 to Val231. The segment covering Asn193–Gly205 has biased composition (basic and acidic residues). Residues Asn193–Val231 are disordered.

In terms of tissue distribution, predominantly expressed in the liver and in the brain, including in the cortex, hypothalamus and hippocampus. Also expressed in heart, lung, kidney and testis. In the colon, expressed in the epithelium and in a subset of immune cells in lymphoid aggregates.

It is found in the membrane. It localises to the secreted. Its function is as follows. Has anti-inflammatory properties. In the colon, acts on macrophages to down-regulate inflammation. May suppress osteoclastogenesis and mature osteoclast resorptive function. In white adipose tissue, decreases local inflammation, via interaction with GPR116. Also required for proper systemic glucose tolerance, specifically sensitizing white adipocytes to insulin and promoting glucose uptake. The insulin sensitizing function in adipose tissue is mediated by interaction with ADGRF5/GPR116 and activation of cAMP signaling. The sequence is that of Fibronectin type III domain-containing protein 4 (Fndc4) from Mus musculus (Mouse).